The sequence spans 828 residues: Protein ELFN1 (828 aa).

Residues 1–27 (MAGRGWGALWVCVAAATLLHAGGLARA) form the signal peptide. Residues 28-418 (DCWLIEGDKG…VPSPSTATHY (391 aa)) lie on the Extracellular side of the membrane. A glycan (N-linked (GlcNAc...) asparagine) is linked at Asn-59. LRR repeat units follow at residues 61 to 82 (TIVD…SLSR), 85 to 106 (NLTY…AFSG), 109 to 130 (NLQV…MLRG), 133 to 154 (KLEY…SFWE), and 157 to 178 (NIVN…TFAG). Residues Asn-85, Asn-90, and Asn-122 are each glycosylated (N-linked (GlcNAc...) asparagine). Residues 190–252 (NPFYCSCELL…LSKLQSVCTE (63 aa)) enclose the LRRCT domain. A glycan (N-linked (GlcNAc...) asparagine) is linked at Asn-210. The disordered stretch occupies residues 259 to 291 (VVGPPRPASGRSQPGRSPPPPPPPEPSDMPCAD). A compositionally biased stretch (pro residues) spans 274–285 (RSPPPPPPPEPS). One can recognise a Fibronectin type-III domain in the interval 312-399 (QAEARPLIKV…HNHTCLTICL (88 aa)). Residues 318-342 (LIKVKQLTQNSATITVQLPSPFHRM) form an LRR 6 repeat. A glycan (N-linked (GlcNAc...) asparagine) is linked at Asn-376. A helical transmembrane segment spans residues 419–439 (IMTILGCLFGMVLVLGAVYYC). The Cytoplasmic portion of the chain corresponds to 440-828 (LRRRRRQEEK…WKGVSAQHKS (389 aa)). Ser-461 carries the phosphoserine modification. Disordered regions lie at residues 517-552 (TPKA…QSSV), 624-649 (LQRH…VRSP), and 696-732 (KGRQ…GLGR). Over residues 529 to 541 (RTGDPPERRDCEL) the composition is skewed to basic and acidic residues. Residues 632-649 (AAGPPRASTSSSGSVRSP) are compositionally biased toward low complexity. Ser-645 bears the Phosphoserine mark. Residues 696–705 (KGRQYGEHRH) show a composition bias toward basic and acidic residues. Pro residues predominate over residues 713–727 (AEPPAPPGPPPPPPH).

Interacts with PPP1CA.

It localises to the membrane. Its subcellular location is the cell projection. The protein resides in the dendrite. Postsynaptic protein that regulates circuit dynamics in the central nervous system by modulating the temporal dynamics of interneuron recruitment. Specifically present in excitatory synapses onto oriens-lacunosum molecular (OLM) interneurons and acts as a regulator of presynaptic release probability to direct the formation of highly facilitating pyramidal-OLM synapses. Inhibits phosphatase activity of protein phosphatase 1 (PP1) complexes. In Homo sapiens (Human), this protein is Protein ELFN1 (ELFN1).